The chain runs to 649 residues: MSPSKWLLTYERAVKKATKVKLAAPKYKHVEIILEATTEDPETLENVIQALCERLKEQSWTIVFKTLIVFHVMLKEGAPNTTIVALSQRPRILEVLKASSLLAQGKNIYNYSRFLSERAKQYGRLGVDYAQVGDAPKKKIREMKLENGLLRNVEGIQAQLRRLIKCQFVAEEIDNDIAITAFRLLVGDLLVLFKAVNIGVINVLEHYFEMGHHDAAQSLRIYKTFVNQTEDIINYLSTARSLEFVTKFPVPNIKHAPISLTASLEEYLNDPDFEENRKQYLQNKSGSPVEETAILNRKPTLRKKKSIPKKQNESSSTIQKENTVQQEASSSEEEAVKSLPETQRTTSRIETQEEEIKEEEMEGEEEEEEEEVPNYESENELEDKVGDLSLSLGVASSFVDEMLRERNNLSAEGTSASPSLDKKSESTNIVQPIPSHPNDSLNPFYNSSSPTYHPQPIPPQLQQVQLLSQMAGNQMANIQYTMNGMQQTGASPNTALNISQVNMYAQNNPVNPSTTNPFQNFLRQPSYQGMQFEQQQPTTIPLQPNIPVLNQQYPVMIPAMEDSRGPLPSPAHIMYPEGSPGFIQHSPNGFTHGHSASPVNIGQKLDVPERPMSTPYTASKNPFSTRELAEPTDLARNSISTESKNPFRS.

The ENTH domain maps to 2–136; sequence SPSKWLLTYE…VDYAQVGDAP (135 aa). Disordered stretches follow at residues 280–382, 409–440, and 590–649; these read YLQN…NELE, LSAE…PNDS, and FTHG…PFRS. Phosphoserine is present on residues S285 and S287. Positions 299 to 308 are enriched in basic residues; it reads PTLRKKKSIP. 2 stretches are compositionally biased toward polar residues: residues 313–326 and 340–349; these read ESSS…TVQQ and PETQRTTSRI. The segment covering 352 to 381 has biased composition (acidic residues); that stretch reads QEEEIKEEEMEGEEEEEEEEVPNYESENEL. 3 stretches are compositionally biased toward polar residues: residues 409–418, 614–624, and 635–649; these read LSAEGTSASP, TPYTASKNPFS, and ARNS…PFRS. Phosphothreonine is present on T414. Residue S417 is modified to Phosphoserine.

Its subcellular location is the cytoplasm. In Schizosaccharomyces pombe (strain 972 / ATCC 24843) (Fission yeast), this protein is ENTH domain-containing protein C19F8.03c.